The primary structure comprises 374 residues: Growth/differentiation factor 8 (374 aa).

The first 22 residues, 1–22 (MHFTQVLISLSVLIACGPVGYG), serve as a signal peptide directing secretion. Residues 23–265 (DITAHQQPST…ISEGPKRIRR (243 aa)) constitute a propeptide that is removed on maturation. Asn72 and Asn274 each carry an N-linked (GlcNAc...) asparagine glycan. 4 cysteine pairs are disulfide-bonded: Cys271-Cys281, Cys280-Cys339, Cys308-Cys371, and Cys312-Cys373.

This sequence belongs to the TGF-beta family. In terms of assembly, homodimer; disulfide-linked. Predominantly expressed in muscle. At hatching, expression is strongest in the skin epithelium, and is also found in the retina and brain. From day 28, expressed in skeletal muscle. In the adult, highest expression is seen in the gastrointestinal tract, brain, muscle, heart and testis. Also expressed in the adult pharynx, kidney, spleen, liver, gill, eyes, skin, swim bladder and ovary.

Its subcellular location is the secreted. Its function is as follows. Acts specifically as a negative regulator of skeletal muscle growth. May down-regulate muscle-specific transcription factors such as myod and myog. This Danio rerio (Zebrafish) protein is Growth/differentiation factor 8 (mstnb).